The sequence spans 643 residues: 1-deoxy-D-xylulose-5-phosphate synthase (643 aa).

Residues H79 and 120–122 contribute to the thiamine diphosphate site; that span reads AHA. Residue D151 participates in Mg(2+) binding. Thiamine diphosphate contacts are provided by residues 152–153, N180, Y287, and E369; that span reads GS. Position 180 (N180) interacts with Mg(2+).

Belongs to the transketolase family. DXPS subfamily. In terms of assembly, homodimer. Mg(2+) serves as cofactor. Thiamine diphosphate is required as a cofactor.

It carries out the reaction D-glyceraldehyde 3-phosphate + pyruvate + H(+) = 1-deoxy-D-xylulose 5-phosphate + CO2. Its pathway is metabolic intermediate biosynthesis; 1-deoxy-D-xylulose 5-phosphate biosynthesis; 1-deoxy-D-xylulose 5-phosphate from D-glyceraldehyde 3-phosphate and pyruvate: step 1/1. Catalyzes the acyloin condensation reaction between C atoms 2 and 3 of pyruvate and glyceraldehyde 3-phosphate to yield 1-deoxy-D-xylulose-5-phosphate (DXP). The protein is 1-deoxy-D-xylulose-5-phosphate synthase of Maricaulis maris (strain MCS10) (Caulobacter maris).